The sequence spans 203 residues: Urease accessory protein UreG (203 aa).

14–21 (GPVGSGKT) is a binding site for GTP.

This sequence belongs to the SIMIBI class G3E GTPase family. UreG subfamily. Homodimer. UreD, UreF and UreG form a complex that acts as a GTP-hydrolysis-dependent molecular chaperone, activating the urease apoprotein by helping to assemble the nickel containing metallocenter of UreC. The UreE protein probably delivers the nickel.

Its subcellular location is the cytoplasm. Its function is as follows. Facilitates the functional incorporation of the urease nickel metallocenter. This process requires GTP hydrolysis, probably effectuated by UreG. This is Urease accessory protein UreG from Sinorhizobium fredii (strain NBRC 101917 / NGR234).